The following is a 544-amino-acid chain: Putative ligase Rv1013 (544 aa).

Lysine 528 participates in a covalent cross-link: Isoglutamyl lysine isopeptide (Lys-Gln) (interchain with Q-Cter in protein Pup).

The protein belongs to the ATP-dependent AMP-binding enzyme family. Post-translationally, pupylated at Lys-528 by the prokaryotic ubiquitin-like protein Pup, which probably leads to its degradation by the proteasome.

This Mycobacterium tuberculosis (strain ATCC 25618 / H37Rv) protein is Putative ligase Rv1013 (pks16).